A 535-amino-acid polypeptide reads, in one-letter code: Methylmalonate-semialdehyde/malonate-semialdehyde dehydrogenase [acylating], mitochondrial (535 aa).

The transit peptide at 1-32 directs the protein to the mitochondrion; the sequence is MAAAVAAAAAMRSRILQVSSKVNATWYPASSF. Lys47, Lys52, Lys55, and Lys76 each carry N6-acetyllysine; alternate. Residues Lys47, Lys52, Lys55, and Lys76 each carry the N6-succinyllysine; alternate modification. Lys87 carries the N6-acetyllysine modification. N6-acetyllysine; alternate occurs at positions 117 and 129. Residues Lys117 and Lys129 each carry the N6-succinyllysine; alternate modification. The NAD(+) site is built by Ala183, Phe185, Lys209, Glu212, Arg213, and Ser262. Residue Ser262 is modified to Phosphoserine. Lys298 bears the N6-acetyllysine mark. Cys317 functions as the Nucleophile in the catalytic mechanism. N6-acetyllysine is present on residues Lys330 and Lys331. 2 positions are modified to N6-acetyllysine; alternate: Lys364 and Lys376. N6-succinyllysine; alternate is present on residues Lys364 and Lys376. At Ser380 the chain carries Phosphoserine. Lys391 bears the N6-succinyllysine mark. Residue Glu417 participates in NAD(+) binding. Residue Lys500 is modified to N6-acetyllysine. The residue at position 517 (Lys517) is an N6-succinyllysine.

This sequence belongs to the aldehyde dehydrogenase family. As to quaternary structure, homotetramer. Acetylation of Lys-55; Lys-117 and Lys-331 is observed in liver mitochondria from fasted mice but not from fed mice.

The protein resides in the mitochondrion. It catalyses the reaction 3-oxopropanoate + NAD(+) + CoA + H2O = hydrogencarbonate + acetyl-CoA + NADH + H(+). It carries out the reaction 2-methyl-3-oxopropanoate + NAD(+) + CoA + H2O = propanoyl-CoA + hydrogencarbonate + NADH + H(+). The enzyme catalyses (R)-2-methyl-3-oxopropanoate + NAD(+) + CoA + H2O = propanoyl-CoA + hydrogencarbonate + NADH + H(+). The catalysed reaction is (S)-2-methyl-3-oxopropanoate + NAD(+) + CoA + H2O = propanoyl-CoA + hydrogencarbonate + NADH + H(+). Malonate and methylmalonate semialdehyde dehydrogenase involved in the catabolism of valine, thymine, and compounds catabolized by way of beta-alanine, including uracil and cytidine. The sequence is that of Methylmalonate-semialdehyde/malonate-semialdehyde dehydrogenase [acylating], mitochondrial from Mus musculus (Mouse).